We begin with the raw amino-acid sequence, 388 residues long: Flavin-dependent monooxygenase (388 aa).

Residues 26 to 27 (PV) and 45 to 48 (YERD) contribute to the FAD site. An NADPH-binding site is contributed by R54. FAD is bound by residues D61, R117, and L139. Positions 192 and 213 each coordinate substrate. Residues D311 and 321 to 324 (GQGV) contribute to the FAD site.

Belongs to the aromatic-ring hydroxylase family. TetX subfamily. In terms of assembly, monomer. FAD is required as a cofactor.

Its subcellular location is the cytoplasm. The catalysed reaction is a tetracycline + NADPH + O2 + H(+) = an 11a-hydroxytetracycline + NADP(+) + H2O. It carries out the reaction tetracycline + NADPH + O2 + H(+) = 11a-hydroxytetracycline + NADP(+) + H2O. It catalyses the reaction tigecycline + NADPH + O2 + H(+) = 11a-hydroxytigecycline + NADP(+) + H2O. The enzyme catalyses oxytetracycline + NADPH + O2 + H(+) = 11a-hydroxy-oxytetracycline + NADP(+) + H2O. With respect to regulation, anhydrotetracycline, a poor substrate, prevents tetracycline degradation in vitro. Its function is as follows. An FAD-requiring monooxygenase active on tetracycline antibiotic derivatives, which leads to their inactivation. Hydroxylates carbon 11a of oxytetracycline and tigecycline. Acts on many tetracycline analogs (chlorotetracycline, demeclocycline, doxycycline, minocycline, oxytetracyclinee), probably by monooxygenization. Tigecycline, a new generation tetracycline antibiotic, is rendered less effective against E.coli by this monooxygenation, is much weaker at inhibiting translation in vitro and binds Mg(2+) considerably less well. Expression in E.coli BW25113 reduces its growth rate about 5%. The reaction probably proceeds by FAD reduction by NADPH and, second, hydroxylation of antibiotic in a ping-pong mechanism. Degrades chlortetracycline, probably by monooxygenation. Slowly oxidizes anhydrotetracycline, the final substrate in tetracycline biosynthesis. The chain is Flavin-dependent monooxygenase from Bacteroides thetaiotaomicron.